Here is a 648-residue protein sequence, read N- to C-terminus: Macrolide export ATP-binding/permease protein MacB (648 aa).

The 239-residue stretch at 5–243 (LELKDIRRSY…TGGTEPVVNT (239 aa)) folds into the ABC transporter domain. 41-48 (GASGSGKS) lines the ATP pocket. 4 helical membrane-spanning segments follow: residues 273-293 (LLTM…VVVG), 523-543 (LFLT…VMNI), 576-596 (AVLV…LIAF), and 611-631 (PLAL…FGWL).

It belongs to the ABC transporter superfamily. Macrolide exporter (TC 3.A.1.122) family. In terms of assembly, homodimer. Part of the tripartite efflux system MacAB-TolC, which is composed of an inner membrane transporter, MacB, a periplasmic membrane fusion protein, MacA, and an outer membrane component, TolC. The complex forms a large protein conduit and can translocate molecules across both the inner and outer membranes. Interacts with MacA.

The protein resides in the cell inner membrane. Its function is as follows. Part of the tripartite efflux system MacAB-TolC. MacB is a non-canonical ABC transporter that contains transmembrane domains (TMD), which form a pore in the inner membrane, and an ATP-binding domain (NBD), which is responsible for energy generation. Confers resistance against macrolides. The sequence is that of Macrolide export ATP-binding/permease protein MacB from Escherichia coli O6:K15:H31 (strain 536 / UPEC).